Consider the following 504-residue polypeptide: Sodium-coupled neutral amino acid symporter 2 (504 aa).

The disordered stretch occupies residues 1 to 28 (MNKAPAQMSRFNIAPDMDSSSTNSNEYT). The Cytoplasmic segment spans residues 1 to 79 (MNKAPAQMSR…SPGSASFGMS (79 aa)). The interval 1–99 (MNKAPAQMSR…SGILGLSYAM (99 aa)) is regulates protein turnover upon amino acid deprivation. Residues 19–28 (SSSTNSNEYT) are compositionally biased toward low complexity. A helical transmembrane segment spans residues 80–99 (VFNLGNAIMGSGILGLSYAM). Residue Asn85 participates in Na(+) binding. Residues 100-105 (ANTGIA) are Extracellular-facing. The helical transmembrane segment at 106-126 (MFVILLVAVAIFSLYSVHLLL) threads the bilayer. The Cytoplasmic segment spans residues 127–161 (KTANEGGSLVYEQLGYKAFGIPGKLAASCSITMQN). The helical transmembrane segment at 162–180 (FGAMASYLYIVKYELPIVI) threads the bilayer. The Extracellular portion of the chain corresponds to 181-189 (RAFLDSNDN). Residues 190 to 210 (AWYTNGDYLVLIVTMSIILPL) form a helical membrane-spanning segment. The Cytoplasmic portion of the chain corresponds to 211–218 (SLLKNLGY). The chain crosses the membrane as a helical span at residues 219-239 (LGYTSGFSLLCMVFFLIVVIY). Residues 240–285 (KKFQIPCPLPENFINITVNVSQPPQTNNSTDEECCKPKYFIFNSQT) lie on the Extracellular side of the membrane. Cysteines 246 and 274 form a disulfide. Residues Asn254 and Asn258 are each glycosylated (N-linked (GlcNAc...) asparagine). The helical transmembrane segment at 286–306 (VYAVPILTFAFVCHPAILPMY) threads the bilayer. Residues 307–322 (EELKDRSRRKMQNVAN) lie on the Cytoplasmic side of the membrane. The chain crosses the membrane as a helical span at residues 323-343 (VSFLGMFIMYLLAALFGYLTF). Residues 344–364 (NEAVEPELLHTYSKVYNFDVV) are Extracellular-facing. Residues 365-385 (LLIVRLAVLTAVTLTVPVVLF) traverse the membrane as a helical segment. Na(+) is bound at residue Thr379. At 386–406 (PIRTSVNHLLGASKEFSWPRH) the chain is on the cytoplasmic side. A helical transmembrane segment spans residues 407 to 427 (ICITVALLVCVNILVIFVPTI). Over 428-429 (RD) the chain is Extracellular. Residues 430–450 (IFGFIGASAAAMLIFILPSAF) form a helical membrane-spanning segment. The Cytoplasmic segment spans residues 451 to 465 (YIKLVKKESMKSVQK). Residues 466 to 488 (IGATLFLIMGFLVMTGSMALIIM) traverse the membrane as a helical segment. Over 489–504 (DWIHNALSSEEHTGGH) the chain is Extracellular.

It belongs to the amino acid/polyamine transporter 2 family.

It localises to the cell membrane. It catalyses the reaction L-alanine(in) + Na(+)(in) = L-alanine(out) + Na(+)(out). It carries out the reaction glycine(in) + Na(+)(in) = glycine(out) + Na(+)(out). The enzyme catalyses L-serine(in) + Na(+)(in) = L-serine(out) + Na(+)(out). The catalysed reaction is L-proline(in) + Na(+)(in) = L-proline(out) + Na(+)(out). It catalyses the reaction L-methionine(in) + Na(+)(in) = L-methionine(out) + Na(+)(out). It carries out the reaction L-histidine(in) + Na(+)(in) = L-histidine(out) + Na(+)(out). The enzyme catalyses L-asparagine(in) + Na(+)(in) = L-asparagine(out) + Na(+)(out). The catalysed reaction is L-glutamine(in) + Na(+)(in) = L-glutamine(out) + Na(+)(out). It catalyses the reaction L-threonine(in) + Na(+)(in) = L-threonine(out) + Na(+)(out). It carries out the reaction L-leucine(in) + Na(+)(in) = L-leucine(out) + Na(+)(out). The enzyme catalyses L-phenylalanine(in) + Na(+)(in) = L-phenylalanine(out) + Na(+)(out). Inhibited by N-methyl-D-glucamine. Inhibited by choline. Allosteric regulation of sodium ions binding by pH. Symporter that cotransports neutral amino acids and sodium ions from the extracellular to the intracellular side of the cell membrane. The transport is pH-sensitive, Li(+)-intolerant, electrogenic, driven by the Na(+) electrochemical gradient and cotransports of neutral amino acids and sodium ions with a stoichiometry of 1:1. The protein is Sodium-coupled neutral amino acid symporter 2 of Danio rerio (Zebrafish).